We begin with the raw amino-acid sequence, 330 residues long: Tryptophan--tRNA ligase (330 aa).

ATP is bound by residues 10-12 and 18-19; these read QPS and GN. Residues 11-19 carry the 'HIGH' region motif; that stretch reads PSGTLTLGN. L-tryptophan is bound at residue aspartate 133. ATP contacts are provided by residues 145–147, isoleucine 184, and 193–197; these read GED and KMSKS. Residues 193–197 carry the 'KMSKS' region motif; the sequence is KMSKS.

It belongs to the class-I aminoacyl-tRNA synthetase family. In terms of assembly, homodimer.

The protein resides in the cytoplasm. It catalyses the reaction tRNA(Trp) + L-tryptophan + ATP = L-tryptophyl-tRNA(Trp) + AMP + diphosphate + H(+). Catalyzes the attachment of tryptophan to tRNA(Trp). The protein is Tryptophan--tRNA ligase of Halalkalibacterium halodurans (strain ATCC BAA-125 / DSM 18197 / FERM 7344 / JCM 9153 / C-125) (Bacillus halodurans).